Consider the following 1167-residue polypeptide: DNA-directed RNA polymerase subunit beta (1167 aa).

Residues 1-27 (MAVSPANQATAATTSAESRSEATGIPG) form a disordered region. Residues 9-23 (ATAATTSAESRSEAT) show a composition bias toward low complexity.

This sequence belongs to the RNA polymerase beta chain family. In terms of assembly, the RNAP catalytic core consists of 2 alpha, 1 beta, 1 beta' and 1 omega subunit. When a sigma factor is associated with the core the holoenzyme is formed, which can initiate transcription.

It carries out the reaction RNA(n) + a ribonucleoside 5'-triphosphate = RNA(n+1) + diphosphate. Functionally, DNA-dependent RNA polymerase catalyzes the transcription of DNA into RNA using the four ribonucleoside triphosphates as substrates. This Amycolatopsis mediterranei (strain S699) (Nocardia mediterranei) protein is DNA-directed RNA polymerase subunit beta.